Reading from the N-terminus, the 567-residue chain is Hydroxylamine reductase 2 (567 aa).

Cys5, Cys8, Cys17, and Cys23 together coordinate [4Fe-4S] cluster. Positions 262, 286, 330, 421, 449, 474, 509, and 511 each coordinate hybrid [4Fe-2O-2S] cluster. At Cys421 the chain carries Cysteine persulfide.

The protein belongs to the HCP family. Requires [4Fe-4S] cluster as cofactor. Hybrid [4Fe-2O-2S] cluster serves as cofactor.

It is found in the cytoplasm. The catalysed reaction is A + NH4(+) + H2O = hydroxylamine + AH2 + H(+). In terms of biological role, catalyzes the reduction of hydroxylamine to form NH(3) and H(2)O. This Clostridium acetobutylicum (strain ATCC 824 / DSM 792 / JCM 1419 / IAM 19013 / LMG 5710 / NBRC 13948 / NRRL B-527 / VKM B-1787 / 2291 / W) protein is Hydroxylamine reductase 2.